The primary structure comprises 307 residues: Oxygen-dependent coproporphyrinogen-III oxidase (307 aa).

S99 contacts substrate. Residues H103 and H113 each contribute to the a divalent metal cation site. The active-site Proton donor is the H113. Residue 115–117 (NVR) coordinates substrate. H152 and H182 together coordinate a divalent metal cation. An important for dimerization region spans residues 247–282 (YVEFNLVFDRGTLFGLQSGGRTESILMSMPPVVNWR). 265–267 (GGR) contributes to the substrate binding site.

It belongs to the aerobic coproporphyrinogen-III oxidase family. As to quaternary structure, homodimer. A divalent metal cation is required as a cofactor.

The protein resides in the cytoplasm. The enzyme catalyses coproporphyrinogen III + O2 + 2 H(+) = protoporphyrinogen IX + 2 CO2 + 2 H2O. The protein operates within porphyrin-containing compound metabolism; protoporphyrin-IX biosynthesis; protoporphyrinogen-IX from coproporphyrinogen-III (O2 route): step 1/1. Functionally, involved in the heme biosynthesis. Catalyzes the aerobic oxidative decarboxylation of propionate groups of rings A and B of coproporphyrinogen-III to yield the vinyl groups in protoporphyrinogen-IX. In Paraburkholderia xenovorans (strain LB400), this protein is Oxygen-dependent coproporphyrinogen-III oxidase.